The chain runs to 147 residues: uncharacterized protein (147 aa).

To M.pneumoniae MPN_465.

This is an uncharacterized protein from Mycoplasma pneumoniae (strain ATCC 29342 / M129 / Subtype 1) (Mycoplasmoides pneumoniae).